We begin with the raw amino-acid sequence, 178 residues long: ATP synthase subunit delta (178 aa).

It belongs to the ATPase delta chain family. In terms of assembly, F-type ATPases have 2 components, F(1) - the catalytic core - and F(0) - the membrane proton channel. F(1) has five subunits: alpha(3), beta(3), gamma(1), delta(1), epsilon(1). F(0) has three main subunits: a(1), b(2) and c(10-14). The alpha and beta chains form an alternating ring which encloses part of the gamma chain. F(1) is attached to F(0) by a central stalk formed by the gamma and epsilon chains, while a peripheral stalk is formed by the delta and b chains.

The protein localises to the cell inner membrane. F(1)F(0) ATP synthase produces ATP from ADP in the presence of a proton or sodium gradient. F-type ATPases consist of two structural domains, F(1) containing the extramembraneous catalytic core and F(0) containing the membrane proton channel, linked together by a central stalk and a peripheral stalk. During catalysis, ATP synthesis in the catalytic domain of F(1) is coupled via a rotary mechanism of the central stalk subunits to proton translocation. In terms of biological role, this protein is part of the stalk that links CF(0) to CF(1). It either transmits conformational changes from CF(0) to CF(1) or is implicated in proton conduction. The chain is ATP synthase subunit delta from Marinobacter nauticus (strain ATCC 700491 / DSM 11845 / VT8) (Marinobacter aquaeolei).